The chain runs to 367 residues: Flagellar P-ring protein (367 aa).

The first 21 residues, 1 to 21, serve as a signal peptide directing secretion; it reads MYVFKALAGIVLALVATLAHA.

It belongs to the FlgI family. As to quaternary structure, the basal body constitutes a major portion of the flagellar organelle and consists of four rings (L,P,S, and M) mounted on a central rod.

Its subcellular location is the periplasm. The protein resides in the bacterial flagellum basal body. Its function is as follows. Assembles around the rod to form the L-ring and probably protects the motor/basal body from shearing forces during rotation. The chain is Flagellar P-ring protein from Salmonella paratyphi C (strain RKS4594).